Reading from the N-terminus, the 165-residue chain is Interferon gamma (165 aa).

Residues 1–23 (MKYTSYILAFQLCIVLGSLGCYC) form the signal peptide. Glutamine 24 bears the Pyrrolidone carboxylic acid mark. N-linked (GlcNAc...) asparagine glycosylation is found at asparagine 48 and asparagine 120.

It belongs to the type II (or gamma) interferon family. Homodimer. Interacts with IFNGR1 (via extracellular domain); this interaction promotes IFNGR1 dimerization. As to expression, released primarily from activated T lymphocytes.

Its subcellular location is the secreted. In terms of biological role, type II interferon produced by immune cells such as T-cells and NK cells that plays crucial roles in antimicrobial, antiviral, and antitumor responses by activating effector immune cells and enhancing antigen presentation. Primarily signals through the JAK-STAT pathway after interaction with its receptor IFNGR1 to affect gene regulation. Upon IFNG binding, IFNGR1 intracellular domain opens out to allow association of downstream signaling components JAK2, JAK1 and STAT1, leading to STAT1 activation, nuclear translocation and transcription of IFNG-regulated genes. Many of the induced genes are transcription factors such as IRF1 that are able to further drive regulation of a next wave of transcription. Plays a role in class I antigen presentation pathway by inducing a replacement of catalytic proteasome subunits with immunoproteasome subunits. In turn, increases the quantity, quality, and repertoire of peptides for class I MHC loading. Increases the efficiency of peptide generation also by inducing the expression of activator PA28 that associates with the proteasome and alters its proteolytic cleavage preference. Up-regulates as well MHC II complexes on the cell surface by promoting expression of several key molecules such as cathepsins B/CTSB, H/CTSH, and L/CTSL. Participates in the regulation of hematopoietic stem cells during development and under homeostatic conditions by affecting their development, quiescence, and differentiation. In Macaca fascicularis (Crab-eating macaque), this protein is Interferon gamma (IFNG).